Consider the following 59-residue polypeptide: QKDCSLPVDTGRGKGWFLRYYYNKNSKTCESFIYGGVGGNKNNFLNIENCCKICKAKNC.

Positions Cys4–Cys54 constitute a BPTI/Kunitz inhibitor domain. Disulfide bonds link Cys4-Cys54, Cys29-Cys50, and Cys51-Cys59.

Belongs to the venom Kunitz-type family. Scorpion delta-Ktx subfamily. Delta-Ktx 2 sub-subfamily. Expressed by the venom gland.

It is found in the secreted. Its function is as follows. Dual-function toxin that completely inhibits trypsin activity at a molar ratio of 1:1 (Ki=136 nM) and that inhibits mKv1.3/KCNA3 potassium channel currents (IC(50)=129.7 nM). In Olivierus martensii (Manchurian scorpion), this protein is Kunitz-type serine protease inhibitor BmKTT-1.